The chain runs to 221 residues: Probable GTP-binding protein EngB (221 aa).

Residues G32–T205 form the EngB-type G domain. GTP is bound by residues G40–S47, G67–L71, D85–G88, T152–D155, and V184–N186. Mg(2+) contacts are provided by S47 and T69.

The protein belongs to the TRAFAC class TrmE-Era-EngA-EngB-Septin-like GTPase superfamily. EngB GTPase family. It depends on Mg(2+) as a cofactor.

Its function is as follows. Necessary for normal cell division and for the maintenance of normal septation. The chain is Probable GTP-binding protein EngB from Leptospira borgpetersenii serovar Hardjo-bovis (strain JB197).